Reading from the N-terminus, the 730-residue chain is Heterogeneous nuclear ribonucleoprotein M (730 aa).

Positions 1–13 are enriched in low complexity; the sequence is MAAGVEAAAEVAA. Positions 1-62 are disordered; the sequence is MAAGVEAAAE…NIKRGGNRFE (62 aa). Alanine 2 is modified (N-acetylalanine). Lysine 17 is covalently cross-linked (Glycyl lysine isopeptide (Lys-Gly) (interchain with G-Cter in SUMO2)). Residue serine 29 is modified to Phosphoserine. A Glycyl lysine isopeptide (Lys-Gly) (interchain with G-Cter in SUMO2) cross-link involves residue lysine 37. A compositionally biased stretch (basic and acidic residues) spans 38-50; that stretch reads GEGERPAQNEKRK. Glycyl lysine isopeptide (Lys-Gly) (interchain with G-Cter in SUMO2) cross-links involve residues lysine 69 and lysine 83. 2 RRM domains span residues 71 to 149 and 204 to 281; these read YRAF…EDPD and STVF…MDER. Residue serine 86 is modified to Phosphoserine. Glycyl lysine isopeptide (Lys-Gly) (interchain with G-Cter in SUMO2) cross-links involve residues lysine 88 and lysine 127. At lysine 134 the chain carries N6-acetyllysine; alternate. Residue lysine 134 forms a Glycyl lysine isopeptide (Lys-Gly) (interchain with G-Cter in SUMO2); alternate linkage. Residues lysine 143 and lysine 145 each participate in a glycyl lysine isopeptide (Lys-Gly) (interchain with G-Cter in SUMO2) cross-link. Phosphoserine is present on serine 204. Lysine 221 is covalently cross-linked (Glycyl lysine isopeptide (Lys-Gly) (interchain with G-Cter in SUMO2)). At lysine 277 the chain carries N6-acetyllysine; alternate. A Glycyl lysine isopeptide (Lys-Gly) (interchain with G-Cter in SUMO2); alternate cross-link involves residue lysine 277. Glycyl lysine isopeptide (Lys-Gly) (interchain with G-Cter in SUMO2) cross-links involve residues lysine 285 and lysine 345. Serine 365 and serine 377 each carry phosphoserine. Glycyl lysine isopeptide (Lys-Gly) (interchain with G-Cter in SUMO2) cross-links involve residues lysine 381 and lysine 388. Position 397 is a phosphoserine (serine 397). 4 tandem repeats follow at residues 400–405, 407–412, 415–420, and 426–431. The interval 400–608 is 27 X 6 AA repeats of [GEVSTPAN]-[ILMV]-[DE]-[RH]-[MLVI]-[GAV]; the sequence is GIERMGPGID…ALGAGIERMG (209 aa). Serine 432 bears the Phosphoserine mark. 3 consecutive repeat copies span residues 433-438, 440-445, and 446-451. Serine 452 bears the Phosphoserine mark. A run of 4 repeats spans residues 453–458, 461–466, 468–473, and 475–480. The residue at position 468 (serine 468) is a Phosphoserine. The residue at position 481 (serine 481) is a Phosphoserine. Repeat copies occupy residues 482–487, 493–498, 500–505, 507–512, 514–519, 521–526, 528–533, 540–545, 547–552, 554–559, 562–566, 567–572, 575–579, 580–585, 588–593, and 603–608. Position 496 is an omega-N-methylarginine (arginine 496). Serine 528 is modified (phosphoserine). Phosphoserine is present on serine 575. Serine 588 bears the Phosphoserine mark. Phosphoserine is present on residues serine 618, serine 633, and serine 637. Lysine 651 is covalently cross-linked (Glycyl lysine isopeptide (Lys-Gly) (interchain with G-Cter in SUMO2)). The region spanning 653–729 is the RRM 3 domain; sequence CQIFVRNLPF…REIDVRIDRN (77 aa). Position 665 is a phosphothreonine (threonine 665). A Glycyl lysine isopeptide (Lys-Gly) (interchain with G-Cter in SUMO2) cross-link involves residue lysine 667. Lysine 672 is modified (N6-acetyllysine). Glycyl lysine isopeptide (Lys-Gly) (interchain with G-Cter in SUMO2) cross-links involve residues lysine 685 and lysine 692. Lysine 698 carries the post-translational modification N6-acetyllysine; alternate. Residue lysine 698 forms a Glycyl lysine isopeptide (Lys-Gly) (interchain with G-Cter in SUMO2); alternate linkage. Lysine 698 is covalently cross-linked (Glycyl lysine isopeptide (Lys-Gly) (interchain with G-Cter in SUMO1); alternate). At serine 701 the chain carries Phosphoserine. Lysine 716 participates in a covalent cross-link: Glycyl lysine isopeptide (Lys-Gly) (interchain with G-Cter in SUMO2).

As to quaternary structure, identified in the spliceosome C complex. Interacts with PPIA/CYPA. In terms of processing, sumoylated.

The protein localises to the nucleus. The protein resides in the nucleolus. Functionally, pre-mRNA binding protein in vivo, binds avidly to poly(G) and poly(U) RNA homopolymers in vitro. Involved in splicing. Acts as a receptor for carcinoembryonic antigen in Kupffer cells, may initiate a series of signaling events leading to tyrosine phosphorylation of proteins and induction of IL-1 alpha, IL-6, IL-10 and tumor necrosis factor alpha cytokines. The protein is Heterogeneous nuclear ribonucleoprotein M (HNRNPM) of Homo sapiens (Human).